The chain runs to 711 residues: Denticleless protein homolog B (711 aa).

3 WD repeats span residues 47 to 89, 96 to 135, and 138 to 178; these read GRAV…MQRL, AHTN…LIGE, and GHQC…KDGF. The DDB1-binding motif signature appears at 168-171; it reads WDTR. A Nuclear localization signal motif is present at residues 197–204; the sequence is PSKVKKRK. WD repeat units lie at residues 215–254, 270–309, 314–355, and 359–398; these read DSQQ…STYR, TRKL…TDPV, GHQN…AAPI, and GHCQ…SEDS. A DDB1-binding motif motif is present at residues 244–247; that stretch reads WDLR. Disordered stretches follow at residues 473-524 and 601-698; these read QTPK…AFTP and EFDQ…TPGS. 2 stretches are compositionally biased toward polar residues: residues 504 to 516 and 606 to 627; these read TPKS…SKTP and LSPS…TLSP. The segment covering 631-642 has biased composition (basic and acidic residues); it reads MKSDFVDKENSS. Low complexity predominate over residues 658–675; it reads DNSSPQFKSSSSPSSRNS. Over residues 684–697 the composition is skewed to polar residues; it reads NAPNSPVSVPTTPG.

Belongs to the WD repeat cdt2 family. Component of the DCX(DTL) E3 ubiquitin ligase complex, at least composed of cul4 (cul4a or cul4b), ddb1, dtl/cdt2 and rbx1.

It is found in the nucleus. The protein localises to the cytoplasm. The protein resides in the cytoskeleton. It localises to the microtubule organizing center. Its subcellular location is the centrosome. It is found in the chromosome. The protein operates within protein modification; protein ubiquitination. Functionally, substrate-specific adapter of a DCX (DDB1-CUL4-X-box) E3 ubiquitin-protein ligase complex required for cell cycle control, DNA damage response and translesion DNA synthesis. The DCX(DTL) complex, also named CRL4(CDT2) complex, mediates the polyubiquitination and subsequent degradation of CDT1, CDKN1A/p21(CIP1), KMT5A and SDE2. CDT1 degradation in response to DNA damage is necessary to ensure proper cell cycle regulation of DNA replication. CDKN1A/p21(CIP1) degradation during S phase or following UV irradiation is essential to control replication licensing. KMT5A degradation is also important for a proper regulation of mechanisms such as TGF-beta signaling, cell cycle progression, DNA repair and cell migration. Most substrates require their interaction with PCNA for their polyubiquitination: substrates interact with PCNA via their PIP-box, and those containing the 'K+4' motif in the PIP box, recruit the DCX(DTL) complex, leading to their degradation. In undamaged proliferating cells, the DCX(DTL) complex also promotes the 'Lys-164' monoubiquitination of PCNA, thereby being involved in PCNA-dependent translesion DNA synthesis. May play a role in the regulation of the circadian clock. The sequence is that of Denticleless protein homolog B (dtl-b) from Xenopus laevis (African clawed frog).